Consider the following 171-residue polypeptide: MTKWFNVGKIVNTHGVKGEIRVVSLTDFPEERYKVGNTLYISNEKGGEPFPVKITSHRQHKTFDLLTFEGYGNVNEVEQFKGSLLKVPEDQLGELAEGEYYYHEIIGCNVVTEEGEALGTIKEVLSPGANDVWVIKRPKGQDLLIPYIDDVVLQVNIENKLVTIHVMEGLL.

The region spanning 97–170 is the PRC barrel domain; that stretch reads EGEYYYHEII…LVTIHVMEGL (74 aa).

It belongs to the RimM family. As to quaternary structure, binds ribosomal protein uS19.

The protein resides in the cytoplasm. Its function is as follows. An accessory protein needed during the final step in the assembly of 30S ribosomal subunit, possibly for assembly of the head region. Essential for efficient processing of 16S rRNA. May be needed both before and after RbfA during the maturation of 16S rRNA. It has affinity for free ribosomal 30S subunits but not for 70S ribosomes. The sequence is that of Ribosome maturation factor RimM from Bacillus cereus (strain ZK / E33L).